Reading from the N-terminus, the 264-residue chain is Major prion protein (264 aa).

An N-terminal signal peptide occupies residues 1–24 (MVKSHIGSWILVLFVAMWSDVGLC). The tract at residues 25–241 (KKRPKPGGGW…ESQAYYQRGA (217 aa)) is interaction with GRB2, ERI3 and SYN1. Residues 28–118 (PKPGGGWNTG…QWNKPSKPKT (91 aa)) are disordered. 6 consecutive repeat copies span residues 54-62 (PQGGGSWGQ), 63-70 (PHGGGWGQ), 71-78 (PHGGSWGQ), 79-86 (PHGGGWGQ), 87-94 (PHGGGWGQ), and 95-103 (PHGGGGWGQ). A 6 X 8 AA tandem repeats of P-H-G-G-G-W-G-Q region spans residues 54–103 (PQGGGSWGQPHGGGWGQPHGGSWGQPHGGGWGQPHGGGWGQPHGGGGWGQ). Positions 55-107 (QGGGSWGQPHGGGWGQPHGGSWGQPHGGGWGQPHGGGWGQPHGGGGWGQGGTH) are enriched in gly residues. H72, G73, G74, H80, G81, G82, H88, G89, G90, H96, G98, and G99 together coordinate Cu(2+). A disulfide bond links C190 and C225. 2 N-linked (GlcNAc...) asparagine glycosylation sites follow: N192 and N208. A241 carries the GPI-anchor amidated alanine lipid modification. A propeptide spans 242–264 (SVVLFSSPPVVLLISFLIFLIVG) (removed in mature form).

This sequence belongs to the prion family. Monomer and homodimer. Has a tendency to aggregate into amyloid fibrils containing a cross-beta spine, formed by a steric zipper of superposed beta-strands. Soluble oligomers may represent an intermediate stage on the path to fibril formation. Copper binding may promote oligomerization. Interacts with GRB2, APP, ERI3/PRNPIP and SYN1. Mislocalized cytosolically exposed PrP interacts with MGRN1; this interaction alters MGRN1 subcellular location and causes lysosomal enlargement. Interacts with KIAA1191.

The protein resides in the cell membrane. Its subcellular location is the golgi apparatus. Functionally, its primary physiological function is unclear. Has cytoprotective activity against internal or environmental stresses. May play a role in neuronal development and synaptic plasticity. May be required for neuronal myelin sheath maintenance. May play a role in iron uptake and iron homeostasis. Soluble oligomers are toxic to cultured neuroblastoma cells and induce apoptosis (in vitro). Association with GPC1 (via its heparan sulfate chains) targets PRNP to lipid rafts. Also provides Cu(2+) or Zn(2+) for the ascorbate-mediated GPC1 deaminase degradation of its heparan sulfate side chains. The polypeptide is Major prion protein (PRNP) (Boselaphus tragocamelus (Nilgai)).